A 609-amino-acid polypeptide reads, in one-letter code: Spore coat protein homolog 1 (609 aa).

Positions 1-17 are cleaved as a signal peptide; the sequence is MKSLLFVVFIFLTTTYA. Residues Asn-82, Asn-397, and Asn-440 are each glycosylated (N-linked (GlcNAc...) asparagine). Positions 527–547 are disordered; it reads TVTQVPEAPGTDGTPSESTAW. Ser-584 is lipidated: GPI-anchor amidated serine. A propeptide spans 585 to 609 (removed in mature form); sequence SSSIKRTPCILPLVILASTLFASFF.

The protein resides in the cell membrane. Functionally, may play a role in cell adhesion. The polypeptide is Spore coat protein homolog 1 (Rhizopus delemar (strain RA 99-880 / ATCC MYA-4621 / FGSC 9543 / NRRL 43880) (Mucormycosis agent)).